Reading from the N-terminus, the 69-residue chain is Mu-conotoxin-like Am3.1 (69 aa).

The N-terminal stretch at M1 to A20 is a signal peptide. Positions V21–R52 are excised as a propeptide. The segment at P22–E43 is disordered. Residues P28–E43 show a composition bias toward basic and acidic residues. A 4-hydroxyproline; partial; in minor form modification is found at P66. The residue at position 68 (C68) is a Cysteine amide.

This sequence belongs to the conotoxin M family. Mostly non-hydroxylated. In terms of processing, contains 3 disulfide bonds. As to expression, expressed by the venom duct.

It localises to the secreted. Mu-conotoxins block voltage-gated sodium channels (Nav). This Conus amadis (Amadis cone) protein is Mu-conotoxin-like Am3.1.